The sequence spans 434 residues: Enolase (434 aa).

Q163 contributes to the (2R)-2-phosphoglycerate binding site. E205 (proton donor) is an active-site residue. D242, E291, and D318 together coordinate Mg(2+). (2R)-2-phosphoglycerate is bound by residues K343, R372, S373, and K394. Residue K343 is the Proton acceptor of the active site.

Belongs to the enolase family. It depends on Mg(2+) as a cofactor.

Its subcellular location is the cytoplasm. It is found in the secreted. The protein localises to the cell surface. It carries out the reaction (2R)-2-phosphoglycerate = phosphoenolpyruvate + H2O. It functions in the pathway carbohydrate degradation; glycolysis; pyruvate from D-glyceraldehyde 3-phosphate: step 4/5. In terms of biological role, catalyzes the reversible conversion of 2-phosphoglycerate (2-PG) into phosphoenolpyruvate (PEP). It is essential for the degradation of carbohydrates via glycolysis. The sequence is that of Enolase from Streptococcus pneumoniae serotype 19F (strain G54).